Here is a 384-residue protein sequence, read N- to C-terminus: Outer membrane protein assembly factor BamB (384 aa).

Residues 1 to 21 form the signal peptide; that stretch reads MKLTLKRKFIAVLALTSLLGA. Cys22 carries N-palmitoyl cysteine lipidation. A lipid anchor (S-diacylglycerol cysteine) is attached at Cys22.

This sequence belongs to the BamB family. In terms of assembly, part of the Bam complex.

Its subcellular location is the cell outer membrane. Its function is as follows. Part of the outer membrane protein assembly complex, which is involved in assembly and insertion of beta-barrel proteins into the outer membrane. This chain is Outer membrane protein assembly factor BamB, found in Taylorella asinigenitalis (strain MCE3).